A 224-amino-acid polypeptide reads, in one-letter code: Dickkopf-related protein 4 (224 aa).

A signal peptide spans 1–18 (MVAAVLLGLSWLCSPLGA). The tract at residues 41-90 (CLSDTDCNTRKFCLQPRDEKPFCATCRGLRRRCQRDAMCCPGTLCVNDVC) is DKK-type Cys-1. The disordered stretch occupies residues 109–139 (GTHAEGTTGHPVQENQPKRKPSIKKSQGRKG). A compositionally biased stretch (basic residues) spans 126–136 (KRKPSIKKSQG). 5 disulfides stabilise this stretch: C145–C157, C151–C166, C156–C194, C176–C202, and C196–C218. The DKK-type Cys-2 stretch occupies residues 145–218 (CLRTFDCGPG…NRQHARLRVC (74 aa)).

This sequence belongs to the dickkopf family. Interacts with LRP5 and LRP6. In terms of processing, appears to be not glycosylated. Can be proteolytically processed by a furin-like protease. In terms of tissue distribution, expressed in cerebellum, T-cells, esophagus and lung.

It localises to the secreted. Functionally, antagonizes canonical Wnt signaling by inhibiting LRP5/6 interaction with Wnt and by forming a ternary complex with the transmembrane protein KREMEN that promotes internalization of LRP5/6. DKKs play an important role in vertebrate development, where they locally inhibit Wnt regulated processes such as antero-posterior axial patterning, limb development, somitogenesis and eye formation. In the adult, Dkks are implicated in bone formation and bone disease, cancer and Alzheimer disease. The polypeptide is Dickkopf-related protein 4 (DKK4) (Homo sapiens (Human)).